A 617-amino-acid chain; its full sequence is Secretogranin-2 (617 aa).

An N-terminal signal peptide occupies residues 1 to 27 (MAEAKTHWLGAALSLIPLIFLISGAEA). The propeptide occupies 28–30 (ASF). The segment at 120 to 143 (QAENEPQSAPKENKPYALNSEKNF) is disordered. Residue tyrosine 151 is modified to Sulfotyrosine. Serine 174 carries the post-translational modification Phosphoserine. The segment at 182 to 200 (TNEIVEEQYTPQSLATLES) is O-glycosylated at one site. Composition is skewed to basic and acidic residues over residues 257-284 (IESQTQEEVRDSKENIEKNEQINDEMKR) and 293-302 (EDLRKESKDQ). Positions 257–302 (IESQTQEEVRDSKENIEKNEQINDEMKRSGQLGIQEEDLRKESKDQ) are disordered. Position 268 is a phosphoserine (serine 268). Phosphoserine is present on residues serine 432, serine 532, serine 555, and serine 556. The disordered stretch occupies residues 552-583 (NQGSSQETDKLAPVSKRFPVGPPKNDDTPNRQ).

This sequence belongs to the chromogranin/secretogranin protein family. In terms of assembly, interacts with Secretogranin III/SCG3. In terms of processing, O-glycosylated.

The protein resides in the secreted. Functionally, neuroendocrine protein of the granin family that regulates the biogenesis of secretory granules. The protein is Secretogranin-2 (SCG2) of Homo sapiens (Human).